Consider the following 201-residue polypeptide: MAAAKDTHEDHDTSTENTDESNHDPQFEPIVSLPEQEIKTLEEDEEELFKMRAKLFRFASENDLPEWKERGTGDVKLLKHKEKGAIRLLMRRDKTLKICANHYITPMMELKPNAGSDRAWVWNTHADFADECPKPELLAIRFLNAENAQKFKTKFEECRKEIEEREKKAGSGKNDHAEKVAEKLEALSVKEETKEDAEEKQ.

Over residues 1–26 (MAAAKDTHEDHDTSTENTDESNHDPQ) the composition is skewed to basic and acidic residues. The segment at 1–35 (MAAAKDTHEDHDTSTENTDESNHDPQFEPIVSLPE) is disordered. Ala2 bears the N-acetylalanine mark. A phosphothreonine mark is found at Thr13 and Thr18. A phosphoserine mark is found at Ser21 and Ser60. In terms of domain architecture, RanBD1 spans 26–164 (QFEPIVSLPE…FEECRKEIEE (139 aa)). Lys150 is subject to N6-acetyllysine; alternate. N6-succinyllysine; alternate is present on Lys150. Positions 163–201 (EEREKKAGSGKNDHAEKVAEKLEALSVKEETKEDAEEKQ) are disordered. Lys183 bears the N6-acetyllysine mark. A Phosphoserine modification is found at Ser188. Lys190 is covalently cross-linked (Glycyl lysine isopeptide (Lys-Gly) (interchain with G-Cter in SUMO2)).

This sequence belongs to the RANBP1 family. Interacts with RAN (via C-terminus of GTP-bound form) but not with GDP-bound RAN. Identified in a complex composed of RAN, RANGAP1 and RANBP1. Identified in a complex that contains TNPO1, RAN and RANBP1. Identified in a complex that contains CSE1L, KPNA2, RAN and RANBP1. Identified in a complex with nucleotide-free RAN and RCC1.

Its function is as follows. Plays a role in RAN-dependent nucleocytoplasmic transport. Alleviates the TNPO1-dependent inhibition of RAN GTPase activity and mediates the dissociation of RAN from proteins involved in transport into the nucleus. Induces a conformation change in the complex formed by XPO1 and RAN that triggers the release of the nuclear export signal of cargo proteins. Promotes the disassembly of the complex formed by RAN and importin beta. Promotes dissociation of RAN from a complex with KPNA2 and CSE1L. Required for normal mitotic spindle assembly and normal progress through mitosis via its effect on RAN. Does not increase the RAN GTPase activity by itself, but increases GTP hydrolysis mediated by RANGAP1. Inhibits RCC1-dependent exchange of RAN-bound GDP by GTP. This chain is Ran-specific GTPase-activating protein (RANBP1), found in Homo sapiens (Human).